Reading from the N-terminus, the 225-residue chain is Large ribosomal subunit protein uL1 (225 aa).

The protein belongs to the universal ribosomal protein uL1 family. In terms of assembly, part of the 50S ribosomal subunit.

In terms of biological role, binds directly to 23S rRNA. Probably involved in E site tRNA release. Its function is as follows. Protein L1 is also a translational repressor protein, it controls the translation of its operon by binding to its mRNA. The protein is Large ribosomal subunit protein uL1 of Thermofilum pendens (strain DSM 2475 / Hrk 5).